A 202-amino-acid chain; its full sequence is Dephospho-CoA kinase (202 aa).

The DPCK domain maps to 3–202; that stretch reads IFGLTGGIGS…ISHRSKYLSC (200 aa). ATP is bound at residue 11-16; the sequence is GSGKSL.

Belongs to the CoaE family.

It is found in the cytoplasm. It carries out the reaction 3'-dephospho-CoA + ATP = ADP + CoA + H(+). It participates in cofactor biosynthesis; coenzyme A biosynthesis; CoA from (R)-pantothenate: step 5/5. In terms of biological role, catalyzes the phosphorylation of the 3'-hydroxyl group of dephosphocoenzyme A to form coenzyme A. The protein is Dephospho-CoA kinase of Ehrlichia chaffeensis (strain ATCC CRL-10679 / Arkansas).